The sequence spans 110 residues: Large ribosomal subunit protein uL22 (110 aa).

This sequence belongs to the universal ribosomal protein uL22 family. In terms of assembly, part of the 50S ribosomal subunit.

Its function is as follows. This protein binds specifically to 23S rRNA; its binding is stimulated by other ribosomal proteins, e.g. L4, L17, and L20. It is important during the early stages of 50S assembly. It makes multiple contacts with different domains of the 23S rRNA in the assembled 50S subunit and ribosome. In terms of biological role, the globular domain of the protein is located near the polypeptide exit tunnel on the outside of the subunit, while an extended beta-hairpin is found that lines the wall of the exit tunnel in the center of the 70S ribosome. The chain is Large ribosomal subunit protein uL22 from Glaesserella parasuis serovar 5 (strain SH0165) (Haemophilus parasuis).